The sequence spans 83 residues: MSSGGLLLLLGLLTLWEVLTPVSSKDRPDLCELPADTGPCRVGFPSFYYNPDEKKCLEFIYGGCEGNANNFITKEECESTCAA.

Residues 1-24 form the signal peptide; that stretch reads MSSGGLLLLLGLLTLWEVLTPVSS. Positions 31–81 constitute a BPTI/Kunitz inhibitor domain; the sequence is CELPADTGPCRVGFPSFYYNPDEKKCLEFIYGGCEGNANNFITKEECESTC. 3 disulfide bridges follow: Cys-31–Cys-81, Cys-40–Cys-64, and Cys-56–Cys-77.

Belongs to the venom Kunitz-type family. As to expression, expressed by the venom gland.

The protein resides in the secreted. Functionally, serine protease inhibitor. This Oxyuranus microlepidotus (Inland taipan) protein is Kunitz-type serine protease inhibitor microlepidin-1.